The sequence spans 309 residues: Eugenol synthase 2 (309 aa).

NADP(+)-binding positions include 13-16 (TGYI), 35-45 (VRETTVSDPVK), Arg36, 86-88 (FMQ), 111-113 (SEF), Lys134, and 154-156 (NCF). Lys134 acts as the Proton donor/acceptor in catalysis.

Belongs to the NmrA-type oxidoreductase family. As to expression, mostly expressed in petals, and, to a lower extent, in sepals, stamens and pistils.

It catalyses the reaction eugenol + a carboxylate + NADP(+) = a coniferyl ester + NADPH. The enzyme catalyses eugenol + acetate + NADP(+) = (E)-coniferyl acetate + NADPH. Its pathway is aromatic compound metabolism; phenylpropanoid biosynthesis. Functionally, catalyzes the synthesis of the phenylpropene eugenol from coniferyl acetate. Phenylpropenes are produced by plants as defense compounds with antimicrobial and antianimal properties, or as floral attractants of pollinators. This Clarkia breweri (Fairy fans) protein is Eugenol synthase 2.